The sequence spans 472 residues: Putative diacyglycerol O-acyltransferase MT3172 (472 aa).

H139 serves as the catalytic Proton acceptor. The segment at 217–238 (DRRVPPTFDRSAPPGPFQRGLS) is disordered.

Belongs to the long-chain O-acyltransferase family.

It carries out the reaction an acyl-CoA + a 1,2-diacyl-sn-glycerol = a triacyl-sn-glycerol + CoA. It functions in the pathway glycerolipid metabolism; triacylglycerol biosynthesis. This chain is Putative diacyglycerol O-acyltransferase MT3172, found in Mycobacterium tuberculosis (strain CDC 1551 / Oshkosh).